The sequence spans 508 residues: DEAD-box ATP-dependent RNA helicase 8 (508 aa).

The disordered stretch occupies residues 1–123 (MDPRARYPPG…LKLPPQDTRY (123 aa)). Low complexity predominate over residues 18–53 (NPNYYNRGPPLQQQHNHHQQQQTSAPHHQQYVQRQP). Basic residues predominate over residues 54–64 (QQHHHHNHHQQ). Positions 134–162 (NEFEDYFLKRELLMGIYEKGFERPSPIQE) match the Q motif motif. One can recognise a Helicase ATP-binding domain in the interval 165-335 (IPIALTGSDI…DKYLPKPYVI (171 aa)). Position 178 to 185 (178 to 185 (AKNGTGKT)) interacts with ATP. The DEAD box motif lies at 283–286 (DEAD). A Helicase C-terminal domain is found at 345–505 (GITQFYAFVE…PIPPQIDQAI (161 aa)).

Belongs to the DEAD box helicase family. DDX6/DHH1 subfamily.

It localises to the cytoplasm. It is found in the P-body. The enzyme catalyses ATP + H2O = ADP + phosphate + H(+). In terms of biological role, ATP-dependent RNA helicase involved in mRNA turnover, and more specifically in mRNA decapping. This chain is DEAD-box ATP-dependent RNA helicase 8, found in Oryza sativa subsp. japonica (Rice).